The primary structure comprises 129 residues: Azurin-1 (129 aa).

The region spanning 1-129 is the Plastocyanin-like domain; it reads AECSVDIAGN…LMKGVLKLVD (129 aa). An intrachain disulfide couples Cys3 to Cys26. Cu cation contacts are provided by His46, Cys112, His117, and Met121.

The protein localises to the periplasm. Transfers electrons from cytochrome c551 to cytochrome oxidase. This Alcaligenes xylosoxydans xylosoxydans (Achromobacter xylosoxidans) protein is Azurin-1.